The following is a 292-amino-acid chain: Arabinose operon regulatory protein (292 aa).

Alpha-L-arabinopyanose contacts are provided by proline 8, threonine 24, arginine 38, tyrosine 82, and histidine 93. An HTH araC/xylS-type domain is found at arginine 180–glycine 279. DNA-binding regions (H-T-H motif) lie at residues alanine 198–leucine 219 and isoleucine 246–threonine 269.

As to quaternary structure, homodimer.

It localises to the cytoplasm. Arabinose converts the repressor form of AraC to the activator form to regulate the araBAD promoter. In the absence of arabinose, AraC binds to the araO2 and araI1 half-sites in the promoter region of the araBAD operon, leading to the formation of a DNA loop that blocks access of RNA polymerase to the promoter. In the presence of arabinose and the cyclic AMP receptor protein (CRP), it binds to the adjacent half-sites araI1 and araI2, leading to the binding of RNA polymerase to the promoter region and transcription of the araBAD operon. AraI1 acts as a switch mechanism allowing both the repressor and the activator forms of AraC protein to regulate the araBAD promoter. Inhibited by D-fucose, which binds competitively to the same site on the protein. Transcription factor that regulates the expression of several genes involved in the transport and metabolism of L-arabinose. Functions both as a positive and a negative regulator. In the presence of arabinose, activates the expression of the araBAD, araE, araFGH and araJ promoters. In the absence of arabinose, negatively regulates the araBAD operon. Represses its own transcription. Acts by binding directly to DNA. This chain is Arabinose operon regulatory protein, found in Escherichia coli (strain K12).